A 180-amino-acid polypeptide reads, in one-letter code: Ribulose bisphosphate carboxylase small subunit, chloroplastic 4 (180 aa).

Residues Met1–Arg56 constitute a chloroplast transit peptide.

The protein belongs to the RuBisCO small chain family. In terms of assembly, heterohexadecamer of 8 large and 8 small subunits.

Its subcellular location is the plastid. It is found in the chloroplast. RuBisCO catalyzes two reactions: the carboxylation of D-ribulose 1,5-bisphosphate, the primary event in carbon dioxide fixation, as well as the oxidative fragmentation of the pentose substrate. Both reactions occur simultaneously and in competition at the same active site. Although the small subunit is not catalytic it is essential for maximal activity. In Solanum tuberosum (Potato), this protein is Ribulose bisphosphate carboxylase small subunit, chloroplastic 4.